Here is a 164-residue protein sequence, read N- to C-terminus: Kunitz-type serine protease inhibitor BbKI (164 aa).

Belongs to the protease inhibitor I3 (leguminous Kunitz-type inhibitor) family. Monomer.

The protein localises to the secreted. Inhibits bovine trypsin, human plasma kallikrein and plasmin and weakly bovine chymotrypsin. In Bauhinia bauhinioides (Perlebia bauhinoides), this protein is Kunitz-type serine protease inhibitor BbKI.